The following is a 434-amino-acid chain: Homogentisate 1,2-dioxygenase (434 aa).

His-289 serves as the catalytic Proton acceptor. Fe cation is bound by residues His-332 and Glu-338. Residues Tyr-347 and His-368 each contribute to the homogentisate site. His-368 is a binding site for Fe cation.

It belongs to the homogentisate dioxygenase family. In terms of assembly, hexamer; dimer of trimers. It depends on Fe cation as a cofactor.

The enzyme catalyses homogentisate + O2 = 4-maleylacetoacetate + H(+). The protein operates within amino-acid degradation; L-phenylalanine degradation; acetoacetate and fumarate from L-phenylalanine: step 4/6. Functionally, involved in the catabolism of homogentisate (2,5-dihydroxyphenylacetate or 2,5-OH-PhAc), a central intermediate in the degradation of phenylalanine and tyrosine. Catalyzes the oxidative ring cleavage of the aromatic ring of homogentisate to yield maleylacetoacetate. In Pseudomonas fluorescens (strain ATCC BAA-477 / NRRL B-23932 / Pf-5), this protein is Homogentisate 1,2-dioxygenase.